A 108-amino-acid chain; its full sequence is CHGFDSGYDITKKEGVESLLSEIENLFGLERLKMIHLNDSKYPLGAAKDRHERIGSGFIGEAGFAVFFSFKEVQRIPWILETPGGNEEHAEDIKKVFEIIEKYRIEVD.

Histidine 2, histidine 36, aspartate 49, histidine 51, and glutamate 81 together coordinate Zn(2+).

It belongs to the AP endonuclease 2 family. Requires Zn(2+) as cofactor.

It catalyses the reaction Endonucleolytic cleavage to 5'-phosphooligonucleotide end-products.. Endonuclease IV plays a role in DNA repair. It cleaves phosphodiester bonds at apurinic or apyrimidinic (AP) sites, generating a 3'-hydroxyl group and a 5'-terminal sugar phosphate. The polypeptide is Probable endonuclease 4 (nfo) (Thermotoga neapolitana).